Here is a 2139-residue protein sequence, read N- to C-terminus: Voltage-dependent L-type calcium channel subunit alpha-1C (2139 aa).

The interval 1–20 is disordered; it reads MVNENTRMYVPEENHQGSNY. Residues 1–124 lie on the Cytoplasmic side of the membrane; that stretch reads MVNENTRMYV…RACISIVEWK (124 aa). Positions 47–68 are calmodulin-binding; sequence GAALSWQAAIDAARQAKLMGSA. A disordered region spans residues 73-98; sequence ISTVSSTQRKRQQYGKPKKQGGTTAT. The segment covering 80-91 has biased composition (basic residues); the sequence is QRKRQQYGKPKK. An I repeat occupies 111–408; the sequence is NPIRRACISI…LVLGVLSGEF (298 aa). A helical transmembrane segment spans residues 125 to 143; the sequence is PFEIIILLTIFANCVALAI. Residues 144–158 are Extracellular-facing; sequence YIPFPEDDSNATNSN. N-linked (GlcNAc...) asparagine glycosylation occurs at Asn-153. Residues 159-179 traverse the membrane as a helical segment; the sequence is LERVEYLFLIIFTVEAFLKVI. Over 180 to 188 the chain is Cytoplasmic; that stretch reads AYGLLFHPN. A helical membrane pass occupies residues 189-209; that stretch reads AYLRNGWNLLDFIIVVVGLFS. The Extracellular segment spans residues 210-232; it reads AILEQATKADGANALGGKGAGFD. The chain crosses the membrane as a helical span at residues 233–251; sequence VKALRAFRVLRPLRLVSGV. The Cytoplasmic portion of the chain corresponds to 252–268; the sequence is PSLQVVLNSIIKAMVPL. The helical transmembrane segment at 269–290 threads the bilayer; that stretch reads LHIALLVLFVIIIYAIIGLELF. Topologically, residues 291 to 350 are extracellular; the sequence is MGKMHKTCYNQEGIIDVPAEEDPSPCALETGHGRQCQNGTVCKPGWDGPKHGITNFDNFA. Disulfide bonds link Cys-298-Cys-326 and Cys-316-Cys-332. A glycan (N-linked (GlcNAc...) asparagine) is linked at Asn-328. Positions 351–372 form an intramembrane region, pore-forming; that stretch reads FAMLTVFQCITMEGWTDVLYWM. Positions 361–364 match the Selectivity filter of repeat I motif; sequence TMEG. Glu-363 is a binding site for Ca(2+). Topologically, residues 373 to 380 are extracellular; the sequence is QDAMGYEL. Residues 381–401 form a helical membrane-spanning segment; sequence PWVYFVSLVIFGSFFVLNLVL. The Cytoplasmic portion of the chain corresponds to 402-524; that stretch reads GVLSGEFSKE…RKCRAAVKSN (123 aa). The tract at residues 428 to 445 is AID/alpha-interaction domain; mediates interaction with the beta subunit; the sequence is QQLEEDLKGYLDWITQAE. A disordered region spans residues 449 to 481; the sequence is PENEDEGMDEDKPRNMSMPTSETESVNTENVAG. Residues 465 to 478 show a composition bias toward polar residues; sequence SMPTSETESVNTEN. Phosphoserine is present on Ser-469. Thr-476 is modified (phosphothreonine). Residues 510-756 form an II repeat; it reads NRFCRRKCRA…VFLAIAVDNL (247 aa). A helical membrane pass occupies residues 525–543; it reads VFYWLVIFLVFLNTLTIAS. The Extracellular portion of the chain corresponds to 544–554; sequence EHYNQPHWLTE. Residues 555 to 575 traverse the membrane as a helical segment; it reads VQDTANKALLALFTAEMLLKM. Residues 576–586 are Cytoplasmic-facing; sequence YSLGLQAYFVS. Residues 587–606 traverse the membrane as a helical segment; it reads LFNRFDCFIVCGGILETILV. Over 607-615 the chain is Extracellular; the sequence is ETKIMSPLG. A helical transmembrane segment spans residues 616–634; it reads ISVLRCVRLLRIFKITRYW. Over 635 to 653 the chain is Cytoplasmic; it reads NSLSNLVASLLNSVRSIAS. A helical membrane pass occupies residues 654–673; it reads LLLLLFLFIIIFSLLGMQLF. At 674 to 693 the chain is on the extracellular side; sequence GGKFNFDEMQTRRSTFDNFP. The pore-forming intramembrane region spans 694 to 715; it reads QSLLTVFQILTGEDWNSVMYDG. The Selectivity filter of repeat II signature appears at 704–707; the sequence is TGED. Glu-706 provides a ligand contact to Ca(2+). Residues 716–725 are Extracellular-facing; sequence IMAYGGPSFP. A helical membrane pass occupies residues 726 to 745; sequence GMLVCIYFIILFICGNYILL. The Cytoplasmic portion of the chain corresponds to 746–900; the sequence is NVFLAIAVDN…LQCHRIVNDT (155 aa). Residues 764–861 are disordered; the sequence is SAQKEEEEEK…EMPVGPRPRP (98 aa). Over residues 783–806 the composition is skewed to basic and acidic residues; that stretch reads SPEKKQEVMEKPAVEESKEEKIEL. Ser-808 and Ser-815 each carry phosphoserine. The interval 829–876 is interaction with STAC2; that stretch reads SENEDKSPHSNPDTAGEEDEEEPEMPVGPRPRPLSELHLKEKAVPMPE. Over residues 843–852 the composition is skewed to acidic residues; it reads AGEEDEEEPE. One copy of the III repeat lies at 887–1169; sequence NRFRLQCHRI…IFVGFVIVTF (283 aa). A helical membrane pass occupies residues 901–919; that stretch reads IFTNLILFFILLSSISLAA. Residues 920–931 lie on the Extracellular side of the membrane; that stretch reads EDPVQHTSFRNH. The helical transmembrane segment at 932–951 threads the bilayer; it reads ILGNADYVFTSIFTLEIILK. Topologically, residues 952–967 are cytoplasmic; the sequence is MTAYGAFLHKGSFCRN. Residues 968 to 986 traverse the membrane as a helical segment; sequence YFNILDLLVVSVSLISFGI. Residues 987-993 lie on the Extracellular side of the membrane; sequence QSSAINV. The helical transmembrane segment at 994–1012 threads the bilayer; that stretch reads VKILRVLRVLRPLRAINRA. The Cytoplasmic portion of the chain corresponds to 1013–1031; it reads KGLKHVVQCVFVAIRTIGN. The helical transmembrane segment at 1032–1051 threads the bilayer; the sequence is IVIVTTLLQFMFACIGVQLF. Residues 1052-1101 are Extracellular-facing; the sequence is KGKLYTCSDSSKQTEAECKGNYITYKDGEVDHPIIQPRSWENSKFDFDNV. Residues Cys-1058 and Cys-1069 are joined by a disulfide bond. Positions 1089-1178 are dihydropyridine binding; it reads RSWENSKFDF…FQEQGEQEYK (90 aa). Positions 1102–1122 form an intramembrane region, pore-forming; it reads LAAMMALFTVSTFEGWPELLY. The Selectivity filter of repeat III motif lies at 1113–1116; sequence TFEG. Glu-1115 provides a ligand contact to Ca(2+). Topologically, residues 1123-1139 are extracellular; sequence RSIDSHTEDKGPIYNYR. Residues 1140 to 1161 traverse the membrane as a helical segment; the sequence is VEISIFFIIYIIIIAFFMMNIF. The Cytoplasmic segment spans residues 1162-1219; sequence VGFVIVTFQEQGEQEYKNCELDKNQRQCVEYALKARPLRRYIPKNQHQYKVWYVVNST. Residues 1206-1479 form an IV repeat; the sequence is NQHQYKVWYV…LFVAVIMDNF (274 aa). The chain crosses the membrane as a helical span at residues 1220-1241; the sequence is YFEYLMFVLILLNTICLAMQHY. Residues 1242–1249 are Extracellular-facing; sequence GQSCLFKI. Residues 1250-1271 traverse the membrane as a helical segment; it reads AMNILNMLFTGLFTVEMILKLI. At 1272-1281 the chain is on the cytoplasmic side; sequence AFKPKGYFSD. A helical membrane pass occupies residues 1282–1301; it reads PWNVFDFLIVIGSIIDVILS. Residues 1302–1324 are Extracellular-facing; the sequence is ETNPAEHTQCSPSMSAEENSRIS. Residues 1325-1343 form a helical membrane-spanning segment; sequence ITFFRLFRVMRLVKLLSRG. Residues 1344–1361 lie on the Cytoplasmic side of the membrane; it reads EGIRTLLWTFIKSFQALP. The helical transmembrane segment at 1362-1382 threads the bilayer; sequence YVALLIVMLFFIYAVIGMQVF. Topologically, residues 1383–1404 are extracellular; sequence GKIALNDTTEINRNNNFQTFPQ. Residue Asn-1388 is glycosylated (N-linked (GlcNAc...) asparagine). Positions 1405–1423 form an intramembrane region, pore-forming; it reads AVLLLFRCATGEAWQDIML. A Selectivity filter of repeat IV motif is present at residues 1414–1417; sequence TGEA. The Extracellular segment spans residues 1424–1451; it reads ACMPGKKCAPESEPSNSTEGETPCGSSF. Residues 1430-1498 are dihydropyridine binding; the sequence is KCAPESEPSN…LGPHHLDEFK (69 aa). Cysteines 1431 and 1447 form a disulfide. An N-linked (GlcNAc...) asparagine glycan is attached at Asn-1439. Positions 1444 to 1486 are phenylalkylamine binding; sequence ETPCGSSFAVFYFISFYMLCAFLIINLFVAVIMDNFDYLTRDW. Residues 1452–1476 form a helical membrane-spanning segment; that stretch reads AVFYFISFYMLCAFLIINLFVAVIM. Residues 1477-2139 are Cytoplasmic-facing; that stretch reads DNFDYLTRDW…ADSRSYVSNL (663 aa). An important for interaction with STAC1, STAC2 and STAC3 region spans residues 1611–1638; that stretch reads DEVTVGKFYATFLIQEYFRKFKKRKEQG. Residues 1611–1644 are calmodulin-binding; sequence DEVTVGKFYATFLIQEYFRKFKKRKEQGLVGKPS. The segment at 1617–1637 is calmodulin-binding IQ region; that stretch reads KFYATFLIQEYFRKFKKRKEQ. The interval 1651 to 1670 is important for localization in at the junctional membrane; the sequence is LQAGLRTLHDIGPEIRRAIS. Phosphoserine is present on residues Ser-1670 and Ser-1691. Composition is skewed to polar residues over residues 1732 to 1741 and 1751 to 1763; these read KTGNNQADTE and STFT…STGS. Residues 1732–1773 form a disordered region; that stretch reads KTGNNQADTESPSHEKLVDSTFTPSSYSSTGSNANINNANNT. Over residues 1764-1773 the composition is skewed to low complexity; sequence NANINNANNT. At Ser-1897 the chain carries Phosphoserine; by PKA. Positions 1940 to 1966 are disordered; sequence RSHSPTTFPRPCPTPPVTPGSRGRPLR. Positions 1947-1957 are enriched in pro residues; that stretch reads FPRPCPTPPVT.

Belongs to the calcium channel alpha-1 subunit (TC 1.A.1.11) family. CACNA1C subfamily. In terms of assembly, component of a calcium channel complex consisting of a pore-forming alpha subunit (CACNA1C) and ancillary beta, gamma and delta subunits. The channel complex contains alpha, beta, gamma and delta subunits in a 1:1:1:1 ratio, i.e. it contains only one of each type of subunit. CACNA1C channel activity is modulated by ancillary subunits, such as CACNB1, CACNB2, CACNB3, CACNA2D1 and CACNA2D4. Interacts with the gamma subunits CACNG4, CACNG6, CACNG7 and CACNG8. Interacts with CACNB1. Interacts with CACNB2. Identified in a complex with CACNA2D4 and CACNB3. Interacts with CACNB3. Interacts with CACNA2D1. Interacts with CACNA2D4. Interacts with CALM1. Interacts (via the N-terminus and the C-terminal C and IQ motifs) with CABP1; this inhibits Ca(2+)-dependent channel inactivation. The binding via the C motif is calcium independent whereas the binding via IQ requires the presence of calcium and is mutually exclusive with calmodulin binding. The binding to the cytoplasmic N-terminal domain is calcium independent but is essential for the channel modulation. Interacts (via C-terminal CDB motif) with CABP5; in a calcium-dependent manner. Interacts with CIB1; the interaction increases upon cardiomyocytes hypertrophy. Interacts with STAC2 and STAC3; this inhibits channel inactivation. Phosphorylation by PKA at Ser-1897 activates the channel. Elevated levels of blood glucose lead to increased phosphorylation by PKA. In terms of tissue distribution, detected in embryonic heart. Detected in retina in rod bipolar cells. Detected in tibialis artery (at protein level). Detected in smooth muscle cells from tibialis artery and in mesenteric artery. High expression in heart, followed by brain and spinal cord.

It is found in the cell membrane. The protein localises to the sarcolemma. It localises to the perikaryon. Its subcellular location is the postsynaptic density membrane. The protein resides in the cell projection. It is found in the dendrite. The protein localises to the T-tubule. It carries out the reaction Ca(2+)(in) = Ca(2+)(out). Its activity is regulated as follows. Inhibited by dihydropyridines (DHP), such as isradipine. Inhibited by nifedipine. Channel activity is regulated by Ca(2+) and calmodulin. Binding of STAC1, STAC2 or STAC3 to a region that overlaps with the calmodulin binding site inhibits channel inactivation by Ca(2+) and calmodulin. Binding of calmodulin or CABP1 at the same regulatory sites results in opposite effects on the channel function. Shear stress and pressure increases calcium channel activity. Its function is as follows. Pore-forming, alpha-1C subunit of the voltage-gated calcium channel that gives rise to L-type calcium currents. Mediates influx of calcium ions into the cytoplasm, and thereby triggers calcium release from the sarcoplasm. Plays an important role in excitation-contraction coupling in the heart. Required for normal heart development and normal regulation of heart rhythm. Required for normal contraction of smooth muscle cells in blood vessels and in the intestine. Essential for normal blood pressure regulation via its role in the contraction of arterial smooth muscle cells. Long-lasting (L-type) calcium channels belong to the 'high-voltage activated' (HVA) group. This chain is Voltage-dependent L-type calcium channel subunit alpha-1C (Cacna1c), found in Mus musculus (Mouse).